The primary structure comprises 137 residues: Large ribosomal subunit protein bL12 (137 aa).

The protein belongs to the bacterial ribosomal protein bL12 family. Homodimer. Part of the ribosomal stalk of the 50S ribosomal subunit. Forms a multimeric L10(L12)X complex, where L10 forms an elongated spine to which 2 to 4 L12 dimers bind in a sequential fashion. Binds GTP-bound translation factors.

Its function is as follows. Forms part of the ribosomal stalk which helps the ribosome interact with GTP-bound translation factors. Is thus essential for accurate translation. The sequence is that of Large ribosomal subunit protein bL12 from Synechococcus sp. (strain JA-3-3Ab) (Cyanobacteria bacterium Yellowstone A-Prime).